We begin with the raw amino-acid sequence, 162 residues long: Small ribosomal subunit protein uS9 (162 aa).

The protein belongs to the universal ribosomal protein uS9 family.

This chain is Small ribosomal subunit protein uS9, found in Methylobacterium nodulans (strain LMG 21967 / CNCM I-2342 / ORS 2060).